A 280-amino-acid polypeptide reads, in one-letter code: Diaminopimelate epimerase (280 aa).

Residues N13 and N67 each coordinate substrate. The Proton donor role is filled by C76. Residues 77–78 (GN), N191, and 208–209 (ER) each bind substrate. Residue C218 is the Proton acceptor of the active site. 219–220 (GT) contacts substrate.

This sequence belongs to the diaminopimelate epimerase family. Homodimer.

The protein resides in the cytoplasm. The enzyme catalyses (2S,6S)-2,6-diaminopimelate = meso-2,6-diaminopimelate. Its pathway is amino-acid biosynthesis; L-lysine biosynthesis via DAP pathway; DL-2,6-diaminopimelate from LL-2,6-diaminopimelate: step 1/1. Its function is as follows. Catalyzes the stereoinversion of LL-2,6-diaminopimelate (L,L-DAP) to meso-diaminopimelate (meso-DAP), a precursor of L-lysine. This chain is Diaminopimelate epimerase, found in Archaeoglobus fulgidus (strain ATCC 49558 / DSM 4304 / JCM 9628 / NBRC 100126 / VC-16).